The following is a 126-amino-acid chain: Glycine cleavage system H protein (126 aa).

Positions 21 to 103 constitute a Lipoyl-binding domain; that stretch reads TATIGISEHA…YEGGWIVKVK (83 aa). An N6-lipoyllysine modification is found at Lys62.

The protein belongs to the GcvH family. The glycine cleavage system is composed of four proteins: P, T, L and H. It depends on (R)-lipoate as a cofactor.

The glycine cleavage system catalyzes the degradation of glycine. The H protein shuttles the methylamine group of glycine from the P protein to the T protein. The polypeptide is Glycine cleavage system H protein (Vibrio campbellii (strain ATCC BAA-1116)).